We begin with the raw amino-acid sequence, 249 residues long: 2,3-bisphosphoglycerate-dependent phosphoglycerate mutase (249 aa).

Substrate contacts are provided by residues 9–16 (RHGQSQWN), 22–23 (TG), Arg61, 88–91 (ERHY), Lys99, 115–116 (RR), and 184–185 (GN). Catalysis depends on His10, which acts as the Tele-phosphohistidine intermediate. The active-site Proton donor/acceptor is the Glu88.

It belongs to the phosphoglycerate mutase family. BPG-dependent PGAM subfamily. As to quaternary structure, homodimer.

The enzyme catalyses (2R)-2-phosphoglycerate = (2R)-3-phosphoglycerate. The protein operates within carbohydrate degradation; glycolysis; pyruvate from D-glyceraldehyde 3-phosphate: step 3/5. Its function is as follows. Catalyzes the interconversion of 2-phosphoglycerate and 3-phosphoglycerate. The protein is 2,3-bisphosphoglycerate-dependent phosphoglycerate mutase of Xanthomonas euvesicatoria pv. vesicatoria (strain 85-10) (Xanthomonas campestris pv. vesicatoria).